The sequence spans 284 residues: Prestalk D11 protein (284 aa).

Residues 1–25 (MLNKLILLLILSSCLVLSVKSEVNV) form the signal peptide. One copy of the A-1 repeat lies at 25–64 (VDCSLVRCAQPICKPHYRLNMTDSCCGRCEPCTDVACTLQ). A B-1 repeat occupies 65–82 (VKYCQDGEVPTGCCPCTL). An A-2 repeat occupies 88 to 126 (DCSLVKCARPVCKPYYRLNMTDSCCGRCEPCTGVACTLQ). One copy of the B-2 repeat lies at 127-144 (IKYCKDGEVPTGCCPCTP). A C-1 repeat occupies 145–159 (QPTKKPDCSKVPCPK). The stretch at 161–178 (LKYCQEGELPTGCCPCTP) is one B-3 repeat. Residues 179-193 (QPTKKPDCSRVPCPK) form a C-2 repeat. Residues 195–212 (LKYCKEGELPTGCCPCTP) form a B-4 repeat. The C-3 repeat unit spans residues 213-228 (QPTKKPDCSDVMCTMD). One copy of the B-5 repeat lies at 229–246 (IRYCKNGELPTGCCPCTP). The C-4 repeat unit spans residues 247 to 262 (QETKVPDCSKAMCTMD). The stretch at 263–278 (IKYCKPGEKPFGCCPC) is one B-6 repeat.

This is Prestalk D11 protein (ampA) from Dictyostelium discoideum (Social amoeba).